Here is a 1165-residue protein sequence, read N- to C-terminus: Leptin receptor (1165 aa).

The first 21 residues, 1–21 (MTCPKFSVALLHWEFIYVITA), serve as a signal peptide directing secretion. Residues 22–838 (FDLAYPITPW…TQDGEKHRND (817 aa)) are Extracellular-facing. 5 disulfides stabilise this stretch: Cys37–Cys90, Cys89–Cys99, Cys131–Cys142, Cys186–Cys196, and Cys188–Cys193. N-linked (GlcNAc...) asparagine glycosylation is found at Asn41, Asn55, Asn72, Asn80, and Asn98. N-linked (GlcNAc...) asparagine glycosylation is present at Asn187. N-linked (GlcNAc...) asparagine glycosylation is found at Asn206, Asn276, Asn347, and Asn397. Residues 239 to 332 (PPLGLHMEIT…STPFTFTTQD (94 aa)) enclose the Fibronectin type-III 1 domain. Disulfide bonds link Cys352–Cys412 and Cys413–Cys418. N-linked (GlcNAc...) asparagine glycosylation occurs at Asn433. Intrachain disulfides connect Cys436–Cys447, Cys473–Cys528, and Cys488–Cys498. Positions 467–484 (HRSSLYCSDVPSVHPISE) are leptin-binding. 3 consecutive Fibronectin type-III domains span residues 539–634 (PPSS…TVVT), 642–736 (GPEF…WPMS), and 740–834 (IVQS…DGEK). The short motif at 622-626 (WSNWS) is the WSXWS motif element. Residues Asn624, Asn659, Asn670, Asn697, Asn728, and Asn750 are each glycosylated (N-linked (GlcNAc...) asparagine). A helical membrane pass occupies residues 839–861 (AGLYVIVPIIISSSILLLGTLLM). Residues 862–1165 (SHQRMKKLFW…MENKMYDLTV (304 aa)) lie on the Cytoplasmic side of the membrane. A Box 1 motif motif is present at residues 870 to 878 (FWEDVPNPK). Ser881 is modified (phosphoserine). The required for JAK2 activation stretch occupies residues 892-897 (ETFEHL). The tract at residues 897–905 (LFIKHTESV) is required for STAT3 phosphorylation. Tyr986 is modified (phosphotyrosine; by JAK2). Tyr1079 carries the post-translational modification Phosphotyrosine. Position 1141 is a phosphotyrosine; by JAK2 (Tyr1141).

Belongs to the type I cytokine receptor family. Type 2 subfamily. Present as a mixture of monomers and dimers. The phosphorylated receptor binds a number of SH2 domain-containing proteins such as JAK2, STAT3, PTPN11, and SOCS3. Interaction with SOCS3 inhibits JAK/STAT signaling and MAPK cascade. Post-translationally, on ligand binding, phosphorylated on two conserved C-terminal tyrosine residues by JAK2. Tyr-986 is required for complete binding and activation of PTPN11, ERK/FOS activation,for interaction with SOCS3 and SOCS3 mediated inhibition of leptin signaling. Phosphorylation on Tyr-1141 is required for STAT3 binding/activation. Phosphorylation of Tyr-1079 has a more accessory role. Kidney, liver, spleen, lung, brain, testis, uterus, ovary, corpus luteum, theca and granulosa cells.

The protein resides in the cell membrane. It is found in the basolateral cell membrane. Functionally, receptor for hormone LEP/leptin. On ligand binding, mediates LEP central and peripheral effects through the activation of different signaling pathways such as JAK2/STAT3 and MAPK cascade/FOS. In the hypothalamus, LEP acts as an appetite-regulating factor that induces a decrease in food intake and an increase in energy consumption by inducing anorexinogenic factors and suppressing orexigenic neuropeptides, also regulates bone mass and secretion of hypothalamo-pituitary-adrenal hormones. In the periphery, increases basal metabolism, influences reproductive function, regulates pancreatic beta-cell function and insulin secretion, is pro-angiogenic and affects innate and adaptive immunity. Control of energy homeostasis and melanocortin production (stimulation of POMC and full repression of AgRP transcription) is mediated by STAT3 signaling, whereas distinct signals regulate NPY and the control of fertility, growth and glucose homeostasis. Involved in the regulation of counter-regulatory response to hypoglycemia by inhibiting neurons of the parabrachial nucleus. Has a specific effect on T lymphocyte responses, differentially regulating the proliferation of naive and memory T-cells. Leptin increases Th1 and suppresses Th2 cytokine production. In Sus scrofa (Pig), this protein is Leptin receptor (LEPR).